Reading from the N-terminus, the 301-residue chain is Thymidylate synthase (301 aa).

Residues Arg-38 and 163–164 (RR) contribute to the dUMP site. Residue Cys-183 is the Nucleophile of the active site. Residues 203 to 206 (RSGD), Asn-214, and 244 to 246 (HIY) contribute to the dUMP site. Asp-206 is a (6R)-5,10-methylene-5,6,7,8-tetrahydrofolate binding site. Ala-300 provides a ligand contact to (6R)-5,10-methylene-5,6,7,8-tetrahydrofolate.

Belongs to the thymidylate synthase family. Homodimer.

The catalysed reaction is dUMP + (6R)-5,10-methylene-5,6,7,8-tetrahydrofolate = 7,8-dihydrofolate + dTMP. It functions in the pathway pyrimidine metabolism; dTTP biosynthesis. Catalyzes the reductive methylation of deoxyuridylate to thymidylate. This is Thymidylate synthase from Varicella-zoster virus (strain Dumas) (HHV-3).